The following is a 1167-amino-acid chain: Putative structural protein VP3 (1167 aa).

This is Putative structural protein VP3 (S3) from Fiji disease virus (isolate Sugarcane) (FDV).